A 100-amino-acid polypeptide reads, in one-letter code: Putative PIN1-like protein (100 aa).

Over residues 1–15 (MADEEKLPPGWEKRM) the composition is skewed to basic and acidic residues. 2 disordered regions span residues 1–52 (MADE…QGEP) and 69–100 (LDLA…REGL). A WW domain is found at 5-38 (EKLPPGWEKRMSRPSGRGYYFNHITNPSQWERPS). The segment covering 27 to 44 (HITNPSQWERPSGNSSSG) has biased composition (polar residues). The segment covering 87 to 100 (QRLHPEDQGRREGL) has biased composition (basic and acidic residues).

The chain is Putative PIN1-like protein (PIN1P1) from Homo sapiens (Human).